Here is a 135-residue protein sequence, read N- to C-terminus: MALYEHMFLARQDIAPQQVDELLNIYKGVIETYGGKVGRVENWGLRPLAYRIRKNRKAYYVLVNIDAPATAIAEVERQMRINEDILRYMTIRVEKHEKEKSAMFSRLDRNGHIGHDEKHPRSPSRQREDVIEGVE.

Residues 104–135 (FSRLDRNGHIGHDEKHPRSPSRQREDVIEGVE) form a disordered region.

This sequence belongs to the bacterial ribosomal protein bS6 family.

Its function is as follows. Binds together with bS18 to 16S ribosomal RNA. The polypeptide is Small ribosomal subunit protein bS6 (Bartonella henselae (strain ATCC 49882 / DSM 28221 / CCUG 30454 / Houston 1) (Rochalimaea henselae)).